Reading from the N-terminus, the 509-residue chain is Fumarate hydratase, mitochondrial (509 aa).

A mitochondrion-targeting transit peptide spans Met-1–Met-43. Residues Ser-144–Thr-146, His-175–Asp-178, Ser-185–Asn-187, and Thr-233 contribute to the substrate site. Residue His-234 is the Proton donor/acceptor of the active site. Ser-364 is an active-site residue. Residues Ser-365 and Lys-370–Asn-372 each bind substrate.

This sequence belongs to the class-II fumarase/aspartase family. Fumarase subfamily. In terms of assembly, homotetramer.

Its subcellular location is the mitochondrion. The protein localises to the cytoplasm. The protein resides in the cytosol. It is found in the nucleus. It localises to the chromosome. The catalysed reaction is (S)-malate = fumarate + H2O. It participates in carbohydrate metabolism; tricarboxylic acid cycle; (S)-malate from fumarate: step 1/1. Its function is as follows. Catalyzes the reversible stereospecific interconversion of fumarate to L-malate. Experiments in other species have demonstrated that specific isoforms of this protein act in defined pathways and favor one direction over the other. Functionally, catalyzes the hydration of fumarate to L-malate in the tricarboxylic acid (TCA) cycle to facilitate a transition step in the production of energy in the form of NADH. Catalyzes the dehydration of L-malate to fumarate. Fumarate metabolism in the cytosol plays a role during urea cycle and arginine metabolism; fumarate being a by-product of the urea cycle and amino-acid catabolism. Also plays a role in DNA repair by promoting non-homologous end-joining (NHEJ). In response to DNA damage translocates to the nucleus and accumulates at DNA double-strand breaks (DSBs): acts by catalyzing formation of fumarate. This chain is Fumarate hydratase, mitochondrial, found in Danio rerio (Zebrafish).